The primary structure comprises 202 residues: CASP-like protein 1U4 (202 aa).

Residues 1–10 (MCLPAKWLHP) are Cytoplasmic-facing. The chain crosses the membrane as a helical span at residues 11–31 (VSLIFRVAGIGLAAVSAAAML). Topologically, residues 32–56 (TASQCTVYADYGWRPRTVTYSDFPA) are extracellular. The helical transmembrane segment at 57 to 77 (FVYLVAATAIATLLEAVALFL) threads the bilayer. Over 78–94 (SWSKKGKSKKSWRVLTM) the chain is Cytoplasmic. The chain crosses the membrane as a helical span at residues 95–115 (LLLGAVVPALLYTSAGAAFAV). Over 116-146 (GWEDIYYYLEPIGRRFSVCRSSVAGGRFCEH) the chain is Extracellular. A helical membrane pass occupies residues 147-167 (VHVSMWLALGAAVAVSFAEFL). Residues 168-202 (TTFRWCHGSGSCSDSDSDSDSDSESGCGHGCHCKH) are Cytoplasmic-facing.

It belongs to the Casparian strip membrane proteins (CASP) family. In terms of assembly, homodimer and heterodimers.

It is found in the cell membrane. This chain is CASP-like protein 1U4, found in Sorghum bicolor (Sorghum).